Reading from the N-terminus, the 251-residue chain is Derlin-1 (251 aa).

The residue at position 2 (Ser2) is an N-acetylserine. The Cytoplasmic portion of the chain corresponds to 2 to 15; it reads SDIGDWFRSIPAIT. Residues 16 to 31 form a helical membrane-spanning segment; the sequence is RYWFAATVAVPLVGKL. Residues 32-69 are Lumenal-facing; that stretch reads GLISPAYLFLWPEAFLYRFQIWRPITATFYFPVGPGTG. Residues 70–89 traverse the membrane as a helical segment; the sequence is FLYLVNLYFLYQYSTRLETG. Residues 90 to 94 lie on the Cytoplasmic side of the membrane; it reads AFDGR. A helical transmembrane segment spans residues 95 to 115; the sequence is PADYLFMLLFNWICIVITGLA. The Lumenal segment spans residues 116–122; it reads MDMQLLM. The helical transmembrane segment at 123–137 threads the bilayer; it reads IPLIMSVLYVWAQLN. Residues 138-154 are Cytoplasmic-facing; it reads RDMIVSFWFGTRFKACY. A helical membrane pass occupies residues 155–166; sequence LPWVILGFNYII. The Lumenal segment spans residues 167-170; sequence GGSV. The chain crosses the membrane as a helical span at residues 171-189; the sequence is INELIGNLVGHLYFFLMFR. Over 190-251 the chain is Cytoplasmic; that stretch reads YPMDLGGRNF…WGQGFRLGDQ (62 aa). Position 201 is a phosphoserine (Ser201). Thr202 is modified (phosphothreonine). Position 226 is a phosphoserine (Ser226). Residues 229-251 are disordered; that stretch reads RAADQNGGGGRHNWGQGFRLGDQ. The SHP-box motif lies at 241–248; it reads NWGQGFRL.

Belongs to the derlin family. Homotetramer. The four subunits of the tetramer are arranged in a twofold symmetry. Forms heterooligomers with DERL2 and DERL3; binding to DERL3 is poorer than that between DERL2 and DERL3. Interacts (via SHP-box motif) with VCP. Interacts with AMFR, SELENOS, SEL1L, SELENOK and SYVN1, as well as with SEL1L-SYVN1 and VCP-SELENOS protein complexes; this interaction is weaker than that observed between DERL2 and these complexes. Interacts with NGLY1 and YOD1. Does not bind to EDEM1. Interacts with DNAJB9. Interacts with RNF103. Interacts with HM13. Interacts with XBP1 isoform 1 (via luminal/ectodomain domain); the interaction obviates the need for ectodomain shedding prior HM13/SPP-mediated XBP1 isoform 1 cleavage. Interacts with the signal recognition particle/SRP and the SRP receptor; in the process of endoplasmic reticulum stress-induced pre-emptive quality control. May interact with UBXN6. Interacts with ZFAND2B; probably through VCP. Interacts with CCDC47. Interacts with C18orf32. May interact with TRAM1. Forms a complex with SVIP and VCP/p97. As to quaternary structure, (Microbial infection) Interacts with the cytomegalovirus US11 protein. As to expression, ubiquitous.

The protein localises to the endoplasmic reticulum membrane. Its function is as follows. Functional component of endoplasmic reticulum-associated degradation (ERAD) for misfolded lumenal proteins. Forms homotetramers which encircle a large channel traversing the endoplasmic reticulum (ER) membrane. This allows the retrotranslocation of misfolded proteins from the ER into the cytosol where they are ubiquitinated and degraded by the proteasome. The channel has a lateral gate within the membrane which provides direct access to membrane proteins with no need to reenter the ER lumen first. May mediate the interaction between VCP and the misfolded protein. Also involved in endoplasmic reticulum stress-induced pre-emptive quality control, a mechanism that selectively attenuates the translocation of newly synthesized proteins into the endoplasmic reticulum and reroutes them to the cytosol for proteasomal degradation. By controlling the steady-state expression of the IGF1R receptor, indirectly regulates the insulin-like growth factor receptor signaling pathway. Functionally, (Microbial infection) In case of infection by cytomegaloviruses, it plays a central role in the export from the ER and subsequent degradation of MHC class I heavy chains via its interaction with US11 viral protein, which recognizes and associates with MHC class I heavy chains. Also participates in the degradation process of misfolded cytomegalovirus US2 protein. The polypeptide is Derlin-1 (Homo sapiens (Human)).